A 226-amino-acid polypeptide reads, in one-letter code: dITP/XTP pyrophosphatase (226 aa).

14–19 contacts substrate; the sequence is TGNKDK. Residues E49 and D83 each contribute to the Mg(2+) site. Catalysis depends on D83, which acts as the Proton acceptor. Substrate is bound by residues T84, 176-179, K199, and 204-205; these read FGYD and HR.

It belongs to the HAM1 NTPase family. In terms of assembly, homodimer. It depends on Mg(2+) as a cofactor.

It catalyses the reaction XTP + H2O = XMP + diphosphate + H(+). The catalysed reaction is dITP + H2O = dIMP + diphosphate + H(+). The enzyme catalyses ITP + H2O = IMP + diphosphate + H(+). Pyrophosphatase that catalyzes the hydrolysis of nucleoside triphosphates to their monophosphate derivatives, with a high preference for the non-canonical purine nucleotides XTP (xanthosine triphosphate), dITP (deoxyinosine triphosphate) and ITP. Seems to function as a house-cleaning enzyme that removes non-canonical purine nucleotides from the nucleotide pool, thus preventing their incorporation into DNA/RNA and avoiding chromosomal lesions. The chain is dITP/XTP pyrophosphatase from Chlorobaculum tepidum (strain ATCC 49652 / DSM 12025 / NBRC 103806 / TLS) (Chlorobium tepidum).